The sequence spans 162 residues: NADH-quinone oxidoreductase subunit I (162 aa).

2 4Fe-4S ferredoxin-type domains span residues L53–E83 and R93–N122. The [4Fe-4S] cluster site is built by C63, C66, C69, C73, C102, C105, C108, and C112.

This sequence belongs to the complex I 23 kDa subunit family. NDH-1 is composed of 14 different subunits. Subunits NuoA, H, J, K, L, M, N constitute the membrane sector of the complex. The cofactor is [4Fe-4S] cluster.

The protein localises to the cell inner membrane. It carries out the reaction a quinone + NADH + 5 H(+)(in) = a quinol + NAD(+) + 4 H(+)(out). Its function is as follows. NDH-1 shuttles electrons from NADH, via FMN and iron-sulfur (Fe-S) centers, to quinones in the respiratory chain. The immediate electron acceptor for the enzyme in this species is believed to be ubiquinone. Couples the redox reaction to proton translocation (for every two electrons transferred, four hydrogen ions are translocated across the cytoplasmic membrane), and thus conserves the redox energy in a proton gradient. This Paramagnetospirillum magneticum (strain ATCC 700264 / AMB-1) (Magnetospirillum magneticum) protein is NADH-quinone oxidoreductase subunit I.